A 593-amino-acid polypeptide reads, in one-letter code: Cysteine/serine-rich nuclear protein 1 (593 aa).

Disordered regions lie at residues 1 to 66 (MTGL…RDFC), 313 to 392 (FREL…GVDD), and 478 to 497 (REGS…GQSS). Low complexity-rich tracts occupy residues 17-46 (SSVS…VSRA) and 351-372 (SCSS…TSGA).

The protein belongs to the AXUD1 family.

The protein resides in the nucleus. In terms of biological role, binds to the consensus sequence 5'-AGAGTG-3' and has transcriptional activator activity. May have a tumor-suppressor function. May play a role in apoptosis. The protein is Cysteine/serine-rich nuclear protein 1 (CSRNP1) of Pongo abelii (Sumatran orangutan).